A 266-amino-acid polypeptide reads, in one-letter code: Lipooligosaccharide biosynthesis protein lic2B (266 aa).

This sequence belongs to the glycosyltransferase 25 family.

Involved in extracellular lipooligosaccharide (LOS) biosynthesis and virulence expression. Involved in the synthesis of the oligosaccharide moiety of the LOS molecule by adding GalNAc. The chain is Lipooligosaccharide biosynthesis protein lic2B (lic2B) from Haemophilus influenzae.